Consider the following 540-residue polypeptide: Glucose-6-phosphate isomerase (540 aa).

The Proton donor role is filled by Glu-346. Residues His-377 and Lys-505 contribute to the active site.

The protein belongs to the GPI family.

It is found in the cytoplasm. The catalysed reaction is alpha-D-glucose 6-phosphate = beta-D-fructose 6-phosphate. The protein operates within carbohydrate biosynthesis; gluconeogenesis. Its pathway is carbohydrate degradation; glycolysis; D-glyceraldehyde 3-phosphate and glycerone phosphate from D-glucose: step 2/4. Catalyzes the reversible isomerization of glucose-6-phosphate to fructose-6-phosphate. The chain is Glucose-6-phosphate isomerase from Francisella tularensis subsp. holarctica (strain FTNF002-00 / FTA).